The following is a 376-amino-acid chain: Glutamate 5-kinase (376 aa).

Lysine 18 serves as a coordination point for ATP. Serine 58, aspartate 145, and asparagine 157 together coordinate substrate. Residues 177–178 and 218–224 contribute to the ATP site; these read SD and TGGMASK. The PUA domain occupies 280-358; sequence TGALTLDAGA…SELPGELRRP (79 aa).

It belongs to the glutamate 5-kinase family.

The protein resides in the cytoplasm. It carries out the reaction L-glutamate + ATP = L-glutamyl 5-phosphate + ADP. Its pathway is amino-acid biosynthesis; L-proline biosynthesis; L-glutamate 5-semialdehyde from L-glutamate: step 1/2. In terms of biological role, catalyzes the transfer of a phosphate group to glutamate to form L-glutamate 5-phosphate. The polypeptide is Glutamate 5-kinase (Mycobacterium tuberculosis (strain ATCC 25177 / H37Ra)).